Here is a 396-residue protein sequence, read N- to C-terminus: Probable sugar efflux transporter (396 aa).

Transmembrane regions (helical) follow at residues 15 to 35 (VLIMACAGFIFNTTEFVPVAM), 51 to 71 (GLMMTVYAWTVLIMSLPAMLA), 84 to 104 (LFIIFIVGHILSVIAWNFWIL), 109 to 129 (MCIALAHSVFWSITASLVMRI), 137 to 157 (QALGMLAIGTALATILGLPIG), 168 to 188 (VTFGIIAVLALSIMFLIIRLL), 209 to 229 (PLLLWLYVTTAIVISAHFTAY), 245 to 265 (NFATAVLLVFGFSGIAASLLF), 276 to 296 (FIVVSMSLLMFSLLLLLFSTE), 297 to 317 (TIIAMFSLVFIWGIGISCIGL), 333 to 353 (VATAIYSGIFNAGIGAGALFG), and 365 to 385 (IGYTGAALGLIGFIIFITTHL).

It belongs to the major facilitator superfamily. SotB (TC 2.A.1.2) family.

Its subcellular location is the cell inner membrane. In terms of biological role, involved in the efflux of sugars. The physiological role may be the reduction of the intracellular concentration of toxic sugars or sugar metabolites. In Haemophilus influenzae (strain PittGG), this protein is Probable sugar efflux transporter.